A 312-amino-acid chain; its full sequence is Ribosomal protein L11 methyltransferase (312 aa).

The S-adenosyl-L-methionine site is built by Thr164, Gly185, Asp207, and Asn249.

This sequence belongs to the methyltransferase superfamily. PrmA family.

The protein resides in the cytoplasm. It carries out the reaction L-lysyl-[protein] + 3 S-adenosyl-L-methionine = N(6),N(6),N(6)-trimethyl-L-lysyl-[protein] + 3 S-adenosyl-L-homocysteine + 3 H(+). Functionally, methylates ribosomal protein L11. The sequence is that of Ribosomal protein L11 methyltransferase from Clostridium novyi (strain NT).